Reading from the N-terminus, the 453-residue chain is Protein FAM117A (453 aa).

A compositionally biased stretch (gly residues) spans 1–25 (MAGAAAGGRGGGAWGPGRGGAGGLR). Positions 1-45 (MAGAAAGGRGGGAWGPGRGGAGGLRRGCSPPAPAGSPRAGLQPLR) are disordered. A phosphoserine mark is found at Ser29 and Ser67. Residues 149–175 (TDHRKEISKLKQQLQRTKLSRSGKEKE) adopt a coiled-coil conformation. The segment at 159-201 (KQQLQRTKLSRSGKEKERGSPLLGDHAVRGALRASPPSFPSGS) is disordered. A phosphoserine mark is found at Ser178, Ser193, Ser201, and Ser213. Positions 269–278 (SSPSMSLASP) are enriched in low complexity. Residues 269–320 (SSPSMSLASPQPCGLASHEEHRGAAEELASTPNDKASSPGHPAFLEDGSPSP) form a disordered region. At Thr299 the chain carries Phosphothreonine. Ser319 and Ser327 each carry phosphoserine. Position 354 is a phosphothreonine (Thr354). Pro residues predominate over residues 406-416 (GSPLPPASPRP). A disordered region spans residues 406-453 (GSPLPPASPRPPPRKDPEASKASPLPFEPWQRTPPSEEPVLFQSSLMV). Residues Ser413 and Ser428 each carry the phosphoserine modification.

This sequence belongs to the FAM117 family.

The protein is Protein FAM117A (FAM117A) of Homo sapiens (Human).